A 225-amino-acid polypeptide reads, in one-letter code: Uracil-DNA glycosylase (225 aa).

Aspartate 65 functions as the Proton acceptor in the catalytic mechanism.

Belongs to the uracil-DNA glycosylase (UDG) superfamily. UNG family.

The protein localises to the cytoplasm. The catalysed reaction is Hydrolyzes single-stranded DNA or mismatched double-stranded DNA and polynucleotides, releasing free uracil.. Functionally, excises uracil residues from the DNA which can arise as a result of misincorporation of dUMP residues by DNA polymerase or due to deamination of cytosine. The protein is Uracil-DNA glycosylase of Clostridium beijerinckii (strain ATCC 51743 / NCIMB 8052) (Clostridium acetobutylicum).